Here is a 322-residue protein sequence, read N- to C-terminus: Chemokine XC receptor 1 (322 aa).

At 1-27 the chain is on the extracellular side; sequence MESSTAFYDYHDKLSLLCENNVIFFST. Residues 28 to 55 form a helical membrane-spanning segment; it reads ISTIVLYSLVFLLSLVGNSLVLWVLVKY. Residues 56-65 lie on the Cytoplasmic side of the membrane; the sequence is ENLESLTNIF. Residues 66–85 traverse the membrane as a helical segment; sequence ILNLCLSDLMFSCLLPVLIS. Topologically, residues 86–98 are extracellular; the sequence is AQWSWFLGDFFCK. A disulfide bond links Cys97 and Cys170. The helical transmembrane segment at 99 to 120 threads the bilayer; it reads FFNMIFGISLYSSIFFLTIMTI. Topologically, residues 121-137 are cytoplasmic; the sequence is HRYLSVVSPISTLGIHT. A helical membrane pass occupies residues 138-162; sequence LRCRVLVTSCVWAASILFSIPDAVF. At 163–185 the chain is on the extracellular side; that stretch reads HKVISLNCKYSEHHGFLASVYQH. Residues 186–204 traverse the membrane as a helical segment; the sequence is NIFFLLSMGIILFCYVQIL. The Cytoplasmic portion of the chain corresponds to 205–220; it reads RTLFRTRSRQRHRTVR. Residues 221–243 form a helical membrane-spanning segment; the sequence is LIFTVVVAYFLSWAPYNLTLFLK. Residues 244–259 are Extracellular-facing; sequence TGIIQQSCESLQQLDI. Residues 260-283 traverse the membrane as a helical segment; sequence AMIICRHLAFSHCCFNPVLYVFVG. The Cytoplasmic portion of the chain corresponds to 284-322; the sequence is IKFRRHLKHLFQQVWLCRKTSSTVPCSPGTFTYEGPSFY.

It belongs to the G-protein coupled receptor 1 family. As to expression, expressed by dendritic cells from the thymus, slpeen, subcutaneous lymph nodes and mesenteric lymph nodes.

The protein localises to the cell membrane. Functionally, receptor for chemokines SCYC1 and SCYC2. Subsequently transduces a signal by increasing the intracellular calcium ions level. Receptor for XCL1/Lymphotactin. The sequence is that of Chemokine XC receptor 1 (Xcr1) from Mus musculus (Mouse).